Reading from the N-terminus, the 391-residue chain is uncharacterized protein (391 aa).

Positions 235 to 330 (VFILSRINLL…LYLKNETQKS (96 aa)) constitute an HTH arsR-type domain.

This is an uncharacterized protein from Methanocaldococcus jannaschii (strain ATCC 43067 / DSM 2661 / JAL-1 / JCM 10045 / NBRC 100440) (Methanococcus jannaschii).